The primary structure comprises 231 residues: Translin-associated protein X homolog (231 aa).

The protein belongs to the translin family.

The protein localises to the cytoplasm. It is found in the nucleus. This Schizosaccharomyces pombe (strain 972 / ATCC 24843) (Fission yeast) protein is Translin-associated protein X homolog.